A 453-amino-acid polypeptide reads, in one-letter code: UDP-glycosyltransferase 74E1 (453 aa).

UDP-alpha-D-glucose is bound by residues Ser-279, 332–334 (SPQ), 349–357 (HCGWNSTLE), and 371–374 (WADQ).

The protein belongs to the UDP-glycosyltransferase family.

In Arabidopsis thaliana (Mouse-ear cress), this protein is UDP-glycosyltransferase 74E1 (UGT74E1).